Consider the following 238-residue polypeptide: Accessory gene regulator protein A (238 aa).

A Response regulatory domain is found at 2-125 (KIFVCEDDQR…LKMRIIDCLE (124 aa)). 4-aspartylphosphate is present on Asp59. The 96-residue stretch at 143–238 (IELKRGSNSV…FASVRNVKKI (96 aa)) folds into the HTH LytTR-type domain.

The protein resides in the cytoplasm. Required for high-level post-exponential phase expression of a series of secreted proteins. This Staphylococcus epidermidis (strain ATCC 35984 / DSM 28319 / BCRC 17069 / CCUG 31568 / BM 3577 / RP62A) protein is Accessory gene regulator protein A (agrA).